Consider the following 168-residue polypeptide: Peptide deformylase (168 aa).

Fe cation-binding residues include cysteine 92 and histidine 134. Glutamate 135 is a catalytic residue. Fe cation is bound at residue histidine 138.

Belongs to the polypeptide deformylase family. Fe(2+) serves as cofactor.

The catalysed reaction is N-terminal N-formyl-L-methionyl-[peptide] + H2O = N-terminal L-methionyl-[peptide] + formate. In terms of biological role, removes the formyl group from the N-terminal Met of newly synthesized proteins. Requires at least a dipeptide for an efficient rate of reaction. N-terminal L-methionine is a prerequisite for activity but the enzyme has broad specificity at other positions. This is Peptide deformylase from Stutzerimonas stutzeri (strain A1501) (Pseudomonas stutzeri).